Consider the following 231-residue polypeptide: NADH-ubiquinone oxidoreductase chain 4 (231 aa).

6 consecutive transmembrane segments (helical) span residues 1–21, 34–54, 61–80, 85–107, 128–148, and 169–189; these read PIAG…YGII, MFLP…LTCL, SLIA…AIII, GLAG…FCLA, ILPM…AIPP, and TIIL…HMFL.

Belongs to the complex I subunit 4 family.

The protein resides in the mitochondrion membrane. The enzyme catalyses a ubiquinone + NADH + 5 H(+)(in) = a ubiquinol + NAD(+) + 4 H(+)(out). Core subunit of the mitochondrial membrane respiratory chain NADH dehydrogenase (Complex I) that is believed to belong to the minimal assembly required for catalysis. Complex I functions in the transfer of electrons from NADH to the respiratory chain. The immediate electron acceptor for the enzyme is believed to be ubiquinone. The protein is NADH-ubiquinone oxidoreductase chain 4 (MT-ND4) of Gloydius blomhoffii (Mamushi).